The primary structure comprises 351 residues: MKLSQFKFKLPEDKIALHPAKYRDESRLMVVHKSTGKIEHKVFKDILDYFDDKDVFIFNDTKVFPARLYGNKEKTGARIEVFLLRELNEELRLWDVLVDPARKIRIGNKLYFGDDDSMVAEVIDNTTSRGRTLRFLYDGSHDEFKKALYALGEAPLPSFIRRPVEEEDAERFQTIFAKNEGAVTAPTAGLHFSRELMKRMEIKGIDFAFVTMHAGLGNFREIDVEDLTKHKMDSEQMYVNADACRIVNNAKDEGKNICAVGTTVMRTIETAVGTDGHLKEFDGWTNKFIFPPYDFSVANSMVTNFHLPLSTLLMLVAAYGGYDLVMEAYHTALKEDYRFGTYGDAMLILDK.

The protein belongs to the QueA family. In terms of assembly, monomer.

The protein localises to the cytoplasm. It catalyses the reaction 7-aminomethyl-7-carbaguanosine(34) in tRNA + S-adenosyl-L-methionine = epoxyqueuosine(34) in tRNA + adenine + L-methionine + 2 H(+). It participates in tRNA modification; tRNA-queuosine biosynthesis. Functionally, transfers and isomerizes the ribose moiety from AdoMet to the 7-aminomethyl group of 7-deazaguanine (preQ1-tRNA) to give epoxyqueuosine (oQ-tRNA). This chain is S-adenosylmethionine:tRNA ribosyltransferase-isomerase, found in Phocaeicola vulgatus (strain ATCC 8482 / DSM 1447 / JCM 5826 / CCUG 4940 / NBRC 14291 / NCTC 11154) (Bacteroides vulgatus).